The chain runs to 810 residues: Probable dehydratase YbiW (810 aa).

The PFL domain maps to Asp-11–Lys-682. A disordered region spans residues Thr-677–His-699. Positions Glu-689–Leu-810 constitute a Glycine radical domain. Gly-786 bears the Glycine radical mark.

Belongs to the glycyl radical enzyme (GRE) family.

Probably shows dehydratase activity. The protein is Probable dehydratase YbiW (ybiW) of Escherichia coli (strain K12).